We begin with the raw amino-acid sequence, 862 residues long: DNA mismatch repair protein MutS (862 aa).

Residue 618-625 (GPNMGGKS) coordinates ATP. The disordered stretch occupies residues 799-824 (QLESRDNQASPAVASAPQQQSLSLSP). The span at 806–824 (QASPAVASAPQQQSLSLSP) shows a compositional bias: low complexity.

The protein belongs to the DNA mismatch repair MutS family.

Its function is as follows. This protein is involved in the repair of mismatches in DNA. It is possible that it carries out the mismatch recognition step. This protein has a weak ATPase activity. This Shewanella denitrificans (strain OS217 / ATCC BAA-1090 / DSM 15013) protein is DNA mismatch repair protein MutS.